A 218-amino-acid chain; its full sequence is Thiopurine S-methyltransferase (218 aa).

Positions 11, 46, 67, and 122 each coordinate S-adenosyl-L-methionine.

The protein belongs to the class I-like SAM-binding methyltransferase superfamily. TPMT family.

The protein localises to the cytoplasm. The enzyme catalyses S-adenosyl-L-methionine + a thiopurine = S-adenosyl-L-homocysteine + a thiopurine S-methylether.. This Vibrio cholerae serotype O1 (strain ATCC 39315 / El Tor Inaba N16961) protein is Thiopurine S-methyltransferase.